Here is a 36-residue protein sequence, read N- to C-terminus: Mu/kappa-theraphotoxin-Ap1a (36 aa).

Intrachain disulfides connect Cys3/Cys18, Cys10/Cys23, and Cys17/Cys30. Residue Phe36 is modified to Phenylalanine amide.

It belongs to the neurotoxin 10 (Hwtx-1) family. As to expression, expressed by the venom gland.

The protein resides in the secreted. In terms of biological role, inhibitor of voltage-gated potassium and sodium channels. Among other potassium channels, it selectively inhibits Kv10.1/KCNH1/EAG1 (IC(50)=236 nM) by shifting the voltage dependence of channel activation in a depolarising direction, it shows a maximum inhibition of 80% at saturating concentrations, it shows fast on-rates, and is poorly reversible. It also slightly affects channel inactivation, when the membrane is highly depolarised (&gt;+80 mV). It shows similar potency on Nav1.7/SCN9A (IC(50)=222 nM) and lower potency on Nav1.2/SCN2A (IC(50)=519 nM). The polypeptide is Mu/kappa-theraphotoxin-Ap1a (Avicularia purpurea (Ecuadorian purple pinktoe tarantula)).